Reading from the N-terminus, the 108-residue chain is Small ribosomal subunit protein uS17 (108 aa).

The protein belongs to the universal ribosomal protein uS17 family. As to quaternary structure, part of the 30S ribosomal subunit.

In terms of biological role, one of the primary rRNA binding proteins, it binds specifically to the 5'-end of 16S ribosomal RNA. This Methanoregula boonei (strain DSM 21154 / JCM 14090 / 6A8) protein is Small ribosomal subunit protein uS17.